We begin with the raw amino-acid sequence, 2211 residues long: Coagulation factor V (2211 aa).

Positions 1-28 (MFLACPGFWVLVVLGSSWAGWGNLGAEA) are cleaved as a signal peptide. Plastocyanin-like domains follow at residues 30 to 193 (KLRQ…LLIC), 203 to 327 (TQKM…IDIK), 348 to 525 (KRWE…LLIC), and 535 to 686 (IQRA…FRDA). F5/8 type A domains follow at residues 30–327 (KLRQ…IDIK) and 348–686 (KRWE…FRDA). Positions 139 and 140 each coordinate Ca(2+). Residues cysteine 167 and cysteine 193 are joined by a disulfide bond. N-linked (GlcNAc...) asparagine glycans are attached at residues asparagine 225, asparagine 239, asparagine 297, asparagine 382, and asparagine 460. The cysteines at positions 248 and 329 are disulfide-linked. A disulfide bridge connects residues cysteine 499 and cysteine 525. N-linked (GlcNAc...) asparagine glycosylation is found at asparagine 553 and asparagine 587. Cysteine 607 and cysteine 688 form a disulfide bridge. Position 644 is a phosphothreonine (threonine 644). Positions 696 to 1564 (SYEIIYEPSG…PDNIAAWYLR (869 aa)) are b. Tyrosine 697, tyrosine 701, and tyrosine 730 each carry sulfotyrosine. Positions 742-1564 (SFRNSSLNQE…PDNIAAWYLR (823 aa)) are cleaved as a propeptide — activation peptide (connecting region). Residues asparagine 745, asparagine 756, asparagine 774, and asparagine 780 are each glycosylated (N-linked (GlcNAc...) asparagine). Positions 814 to 844 (LEHAGLDKNSALNPPMAEHSSPYSEDPREDH) are disordered. Residues asparagine 902, asparagine 952, and asparagine 964 are each glycosylated (N-linked (GlcNAc...) asparagine). The span at 954–969 (TVNKLPNSPQNDSRTW) shows a compositional bias: polar residues. The segment at 954–1039 (TVNKLPNSPQ…PLSPRSFHPL (86 aa)) is disordered. Over residues 995–1009 (PLQDRQDRRNSRLKE) the composition is skewed to basic and acidic residues. Asparagine 1044, asparagine 1053, asparagine 1062, asparagine 1071, asparagine 1078, and asparagine 1094 each carry an N-linked (GlcNAc...) asparagine glycan. Disordered regions lie at residues 1084 to 1162 (SLPD…IPNY) and 1195 to 1471 (QPSI…FGQT). Polar residues-rich tracts occupy residues 1091–1103 (TSPN…TSSP) and 1127–1160 (THST…SQIP). Tandem repeats lie at residues 1124–1137 (SDPT…SNRS), 1138–1151 (PDPT…SNRS), 1188–1196 (ATSLDLSQP), 1197–1205 (SISPDLGQM), 1206–1214 (ALSPDPGQE), 1215–1223 (SLSPDLGQT), 1224–1232 (SLSPDLSQE), 1233–1241 (SLSPDLGQT), 1242–1250 (ALSPDPSQE), 1251–1259 (SLSPDLGQT), 1260–1268 (ALSPDPSQE), 1269–1277 (SLSPDLGQT), 1278–1286 (ALSPDPGQE), 1287–1295 (SLSPDLGQT), 1296–1304 (SLSPDLSQE), 1305–1313 (SLSPDLGQT), 1314–1322 (ALSPDPSQE), 1323–1331 (SLSPDLGQT), 1332–1340 (ALSPDPSQE), 1341–1349 (SLSPDLGQT), 1350–1358 (SLSPDLGQE), 1359–1367 (SLSPDLGQT), 1368–1376 (ALSPDPSQE), 1377–1385 (SLSPDLGQT), 1386–1394 (SLSPDLGQE), 1395–1403 (SLSPDLGQT), 1404–1412 (ALSPDLSQE), 1413–1421 (SLSPDLGQT), 1422–1430 (PLSPDLSLE), and 1431–1439 (SLSPDLSQL). The interval 1124–1151 (SDPTHSTTAPSNRSPDPTHSTTAPSNRS) is 2 X 14 AA tandem repeats. The 30 X 9 AA approximate tandem repeats of [AS]-L-S-P-D-[LP]-[GS]-Q-[TE] stretch occupies residues 1188–1453 (ATSLDLSQPS…TSPPLDLNQT (266 aa)). Polar residues-rich tracts occupy residues 1214–1234 (ESLS…QESL), 1241–1252 (TALSPDPSQESL), 1259–1270 (TALSPDPSQESL), 1286–1306 (ESLS…QESL), 1313–1324 (TALSPDPSQESL), 1331–1352 (TALS…TSLS), 1367–1388 (TALS…TSLS), and 1403–1414 (TALSPDLSQESL). Residues 1422–1441 (PLSPDLSLESLSPDLSQLDL) are compositionally biased toward low complexity. A 2-29; truncated repeat occupies 1440 to 1444 (DLKQT). Positions 1442–1463 (KQTSPPLDLNQTSHTSESSQSL) are enriched in polar residues. A 2-30 repeat occupies 1445–1453 (SPPLDLNQT). Asparagine 1451 and asparagine 1490 each carry an N-linked (GlcNAc...) asparagine glycan. Sulfotyrosine occurs at positions 1513, 1529, 1537, and 1541. 2 N-linked (GlcNAc...) asparagine glycosylation sites follow: asparagine 1550 and asparagine 1690. Plastocyanin-like domains follow at residues 1569–1738 (NRKY…LLIC) and 1748–1890 (NMPV…FLIV). Residues 1569 to 1890 (NRKYYYIAAE…AGMQTPFLIV (322 aa)) form the F5/8 type A 3 domain. Cysteine 1712 and cysteine 1738 are disulfide-bonded. The Cu cation site is built by histidine 1830 and histidine 1832. Residue asparagine 1839 is glycosylated (N-linked (GlcNAc...) asparagine). Aspartate 1872 serves as a coordination point for Cu cation. Disulfide bonds link cysteine 1894–cysteine 2048 and cysteine 2053–cysteine 2208. 2 F5/8 type C domains span residues 1894 to 2048 (CKMP…LQGC) and 2053 to 2208 (CSTP…LFGC). N-linked (GlcNAc...) asparagine glycosylation is found at asparagine 1997 and asparagine 2196.

This sequence belongs to the multicopper oxidase family. As to quaternary structure, factor Va, the activated form of factor V, is composed of a heavy chain and a light chain, non-covalently bound. The interaction between the two chains is calcium-dependent. Forms heterodimer with SERPINA5. Post-translationally, thrombin activates factor V proteolytically to the active cofactor, factor Va (formation of a heavy chain at the N-terminus and a light chain at the C-terminus). In terms of processing, sulfation is required for efficient thrombin cleavage and activation and for full procoagulant activity. Activated protein C inactivates factor V and factor Va by proteolytic degradation.

The protein localises to the secreted. Inhibited by SERPINA5. Its function is as follows. Central regulator of hemostasis. It serves as a critical cofactor for the prothrombinase activity of factor Xa that results in the activation of prothrombin to thrombin. The polypeptide is Coagulation factor V (F5) (Bos taurus (Bovine)).